Reading from the N-terminus, the 238-residue chain is tRNA (guanine-N(1)-)-methyltransferase (238 aa).

Residues glycine 110 and 129-134 (LGDFIL) contribute to the S-adenosyl-L-methionine site.

The protein belongs to the RNA methyltransferase TrmD family. Homodimer.

The protein localises to the cytoplasm. It carries out the reaction guanosine(37) in tRNA + S-adenosyl-L-methionine = N(1)-methylguanosine(37) in tRNA + S-adenosyl-L-homocysteine + H(+). In terms of biological role, specifically methylates guanosine-37 in various tRNAs. The chain is tRNA (guanine-N(1)-)-methyltransferase from Clostridium botulinum (strain Alaska E43 / Type E3).